The following is a 94-amino-acid chain: Large ribosomal subunit protein bL27 (94 aa).

Positions Met-1–Phe-9 are excised as a propeptide. The interval Phe-9–Ala-33 is disordered.

It belongs to the bacterial ribosomal protein bL27 family. Post-translationally, the N-terminus is cleaved by ribosomal processing cysteine protease Prp.

The sequence is that of Large ribosomal subunit protein bL27 from Streptococcus pneumoniae serotype 4 (strain ATCC BAA-334 / TIGR4).